Here is a 95-residue protein sequence, read N- to C-terminus: Transcription and mRNA export factor ENY2-2 (95 aa).

It belongs to the ENY2 family. As to quaternary structure, component of the nuclear pore complex (NPC)-associated TREX-2 complex (transcription and export complex 2). Component of the SAGA transcription coactivator-HAT complex. Within the SAGA complex, participates in a subcomplex of SAGA called the DUB module (deubiquitination module).

Its subcellular location is the nucleus. The protein resides in the nucleoplasm. In terms of biological role, involved in mRNA export coupled transcription activation by association with both the TREX-2 and the SAGA complexes. The transcription regulatory histone acetylation (HAT) complex SAGA is a multiprotein complex that activates transcription by remodeling chromatin and mediating histone acetylation and deubiquitination. Within the SAGA complex, participates in a subcomplex that specifically deubiquitinates histones. The SAGA complex is recruited to specific gene promoters by activators, where it is required for transcription. The TREX-2 complex functions in docking export-competent ribonucleoprotein particles (mRNPs) to the nuclear entrance of the nuclear pore complex (nuclear basket). TREX-2 participates in mRNA export and accurate chromatin positioning in the nucleus by tethering genes to the nuclear periphery. The protein is Transcription and mRNA export factor ENY2-2 (eny2-2) of Salmo salar (Atlantic salmon).